Here is a 957-residue protein sequence, read N- to C-terminus: MTQTLSQLENSGAFIERHIGPDAAQQQEMLNAVGAQSLNALTGQIVPKDIQLATPPQVGAPATEYAALAELKAIASRNKRFTSYIGMGYTAVQLPPVILRNMLENPGWYTAYTPYQPEVSQGRLEALLNFQQVTLDLTGLDMASASLLDEATAAAEAMAMAKRVSKLKNANRFFVASDVHPQTLDVVRTRAETFGFEVIVDDAQKVLDHQDVFGVLLQQVGTTGEIHDYTALISELKSRKIVVSVAADIMALVLLTAPGKQGADIVFGSAQRFGVPMGYGGPHAAFFAAKDEYKRSMPGRIIGVSKDAAGNTALRMAMQTREQHIRREKANSNICTSQVLLANIASLYAVYHGPVGLKRIANRIHRLTDILAAGLQQKGLKLRHAHYFDTLCVEVADKAGVLTRAEAAEINLRSDILNAVGITLDETTTRENVMQLFSVLLGDNHGLDIDTLDKDVAHDSRSIQPAMLRDDEILTHPVFNRYHSETEMMRYMHSLERKDLALNQAMIPLGSCTMKLNAAAEMIPITWPEFAELHPFCPPEQAEGYQQMIAQLADWLVKLTGYDAVCMQPNSGAQGEYAGLLAIRHYHESCNEGHRDICLIPASAHGTNPASAHMAGMQVVVVACDKNGNIDLTDLRAKAEQAGDNLSCIMVTYPSTHGVYEETIREVCEVVHQFGGQVYLDGANMNAQVGITSPGFIGADVSHLNLHKTFCIPHGGGGPGMGPIGVKAHLAPFVPGHSVVQIEGMLTRQGAVSAAPFGSASILPISWMYIRMMGAEGLKKASQVAILNANYIASRLQDAFPVLYTGRDGRVAHECILDIRPLKEETGISELDIAKRLIDYGFHAPTMSFPVAGTLMVEPTESESKVELDRFIDAMLAIRAEIDQVKAGVWPLEDNPLVNAPHIQSELVAEWAHPYSREVAVFPAGVADKYWPTVKRLDDVYGDRNLFCSCVPISEYQ.

K708 carries the post-translational modification N6-(pyridoxal phosphate)lysine.

Belongs to the GcvP family. The glycine cleavage system is composed of four proteins: P, T, L and H. It depends on pyridoxal 5'-phosphate as a cofactor.

The catalysed reaction is N(6)-[(R)-lipoyl]-L-lysyl-[glycine-cleavage complex H protein] + glycine + H(+) = N(6)-[(R)-S(8)-aminomethyldihydrolipoyl]-L-lysyl-[glycine-cleavage complex H protein] + CO2. The glycine cleavage system catalyzes the degradation of glycine. The P protein binds the alpha-amino group of glycine through its pyridoxal phosphate cofactor; CO(2) is released and the remaining methylamine moiety is then transferred to the lipoamide cofactor of the H protein. The protein is Glycine dehydrogenase (decarboxylating) of Escherichia coli (strain ATCC 8739 / DSM 1576 / NBRC 3972 / NCIMB 8545 / WDCM 00012 / Crooks).